A 792-amino-acid chain; its full sequence is Kinesin-like protein KIFC2 (792 aa).

Disordered stretches follow at residues 22 to 45 and 142 to 184; these read AAAV…RRRP and QGTQ…QEHQ. Residues 142–169 show a composition bias toward polar residues; that stretch reads QGTQPTCPVQPSTLDGSLSQEESSSQPT. The stretch at 186–347 forms a coiled coil; the sequence is LQLEEEQRVW…ARMASLRQGC (162 aa). A Kinesin motor domain is found at 409 to 732; that stretch reads NIRVLCRLRP…LKFAERVGQV (324 aa). Residue 486–493 coordinates ATP; sequence GQTGTGKT. The segment at 734 to 792 is disordered; that stretch reads LGPARRRRAPRSGTPSSLSTDTPLTGTSCTPTPSPGSPPSTSPNSCSGLTLEPPGDPPP. Over residues 744–764 the composition is skewed to low complexity; that stretch reads RSGTPSSLSTDTPLTGTSCTP. The span at 765–774 shows a compositional bias: pro residues; it reads TPSPGSPPST.

It belongs to the TRAFAC class myosin-kinesin ATPase superfamily. Kinesin family. Present in axons and dendrites of neurons in the central and peripheral nervous systems.

The protein localises to the cytoplasm. It is found in the cytoskeleton. Its function is as follows. May play a role in microtubule-dependent retrograde axonal transport. May function as the motor for the transport of multivesicular body (MVB)-like organelles in dendrites. The polypeptide is Kinesin-like protein KIFC2 (Kifc2) (Mus musculus (Mouse)).